Reading from the N-terminus, the 123-residue chain is Intracellular iron chaperone frataxin (123 aa).

Homodimer, upon Fe(2+) binding. Interacts with the SufS/SufU complex. Interacts with CpfC. The cofactor is Fe(2+).

It is found in the cytoplasm. Its function is as follows. Plays an essential role in iron intracellular trafficking to iron cofactor biogenesis systems including iron-sulfur cluster (Fe-S) or heme assembly. Promotes the biosynthesis of iron-sulfur clusters by delivering Fe to the complex composed of the cysteine desulfurase SufS and the zinc-dependent sulfurtransferase SufU. Also plays a critical role in coproporphyrin-dependent heme b biogenesis and thus provides an essential function for the bacterial global metabolism. This is Intracellular iron chaperone frataxin (fra) from Bacillus subtilis (strain 168).